The chain runs to 406 residues: Probable sodium/metabolite cotransporter BASS1, chloroplastic (406 aa).

The transit peptide at 1–64 (MPLLRRPPAA…RHLCGIPSSR (64 aa)) directs the protein to the chloroplast. A run of 9 helical transmembrane segments spans residues 98 to 118 (VGEV…AVAL), 123 to 143 (AFLW…MLGM), 152 to 172 (LKTA…QYSV), 187 to 209 (PSYY…SNIV), 217 to 237 (VALS…LTPL), 252 to 272 (MGLF…GALL), 278 to 298 (GLVQ…VAVL), 315 to 335 (LQVV…GYVL), and 376 to 396 (VPCA…AGIW).

It belongs to the bile acid:sodium symporter (BASS) (TC 2.A.28) family.

The protein resides in the membrane. It localises to the plastid. Its subcellular location is the chloroplast envelope. Functionally, may function as sodium-coupled metabolite transporter across the chloroplast envelope. The sequence is that of Probable sodium/metabolite cotransporter BASS1, chloroplastic (BASS1) from Oryza sativa subsp. japonica (Rice).